The primary structure comprises 391 residues: Protein CAJ1 (391 aa).

One can recognise a J domain in the interval 4–73 (ETEYYDILGI…RSKYDQFGKE (70 aa)). A disordered region spans residues 119-161 (KEDEEGTAATETEKADESTDGGMVKHDTNKAESLKKDKLSKEQ). The segment covering 129–161 (ETEKADESTDGGMVKHDTNKAESLKKDKLSKEQ) has biased composition (basic and acidic residues). Lys-132 is covalently cross-linked (Glycyl lysine isopeptide (Lys-Gly) (interchain with G-Cter in ubiquitin)).

The chain is Protein CAJ1 (CAJ1) from Saccharomyces cerevisiae (strain ATCC 204508 / S288c) (Baker's yeast).